The chain runs to 409 residues: Pyrophosphate--fructose 6-phosphate 1-phosphotransferase (409 aa).

Residue glycine 14 participates in diphosphate binding. Mg(2+) is bound at residue aspartate 123. Residues 151 to 153 (TID), 196 to 198 (MGR), glutamate 268, and 325 to 328 (YFAR) each bind substrate. Catalysis depends on aspartate 153, which acts as the Proton acceptor.

The protein belongs to the phosphofructokinase type A (PFKA) family. PPi-dependent PFK group II subfamily. Clade 'P' sub-subfamily. In terms of assembly, homotetramer. Mg(2+) is required as a cofactor.

Its subcellular location is the cytoplasm. The enzyme catalyses beta-D-fructose 6-phosphate + diphosphate = beta-D-fructose 1,6-bisphosphate + phosphate + H(+). The protein operates within carbohydrate degradation; glycolysis; D-glyceraldehyde 3-phosphate and glycerone phosphate from D-glucose: step 3/4. Non-allosteric. Functionally, catalyzes the phosphorylation of D-fructose 6-phosphate, the first committing step of glycolysis. Uses inorganic phosphate (PPi) as phosphoryl donor instead of ATP like common ATP-dependent phosphofructokinases (ATP-PFKs), which renders the reaction reversible, and can thus function both in glycolysis and gluconeogenesis. Consistently, PPi-PFK can replace the enzymes of both the forward (ATP-PFK) and reverse (fructose-bisphosphatase (FBPase)) reactions. The chain is Pyrophosphate--fructose 6-phosphate 1-phosphotransferase from Methylotuvimicrobium alcaliphilum (strain DSM 19304 / NCIMB 14124 / VKM B-2133 / 20Z) (Methylomicrobium alcaliphilum).